A 265-amino-acid polypeptide reads, in one-letter code: Isoprenyl transferase (265 aa).

Residue Asp35 is part of the active site. Asp35 lines the Mg(2+) pocket. Substrate is bound by residues 36 to 39, Trp40, Arg48, His52, and 80 to 82; these read GNGR and STE. The active-site Proton acceptor is the Asn83. Residues Trp84, Arg86, Arg203, and 209–211 each bind substrate; that span reads RIS. Glu222 contributes to the Mg(2+) binding site.

This sequence belongs to the UPP synthase family. Homodimer. It depends on Mg(2+) as a cofactor.

Its function is as follows. Catalyzes the condensation of isopentenyl diphosphate (IPP) with allylic pyrophosphates generating different type of terpenoids. This is Isoprenyl transferase from Prochlorococcus marinus (strain MIT 9313).